The following is a 421-amino-acid chain: Polymerase delta-interacting protein 3 (421 aa).

Alanine 2 is subject to N-acetylalanine. Serine 5 is modified (phosphoserine). Arginine 33 bears the Omega-N-methylarginine mark. Phosphoserine occurs at positions 44 and 127. Threonine 140 is modified (phosphothreonine). Residue lysine 200 forms a Glycyl lysine isopeptide (Lys-Gly) (interchain with G-Cter in SUMO2) linkage. 3 positions are modified to phosphoserine: serine 204, serine 215, and serine 217. Lysine 223 participates in a covalent cross-link: Glycyl lysine isopeptide (Lys-Gly) (interchain with G-Cter in SUMO2). The residue at position 244 (serine 244) is a Phosphoserine. Residue lysine 248 forms a Glycyl lysine isopeptide (Lys-Gly) (interchain with G-Cter in SUMO2) linkage. Serine 275 is modified (phosphoserine). An RRM domain is found at 280-351 (TKMTVNNLHP…QPMKCNLHMN (72 aa)). Positions 370–379 (SMKKESELPR) are enriched in basic and acidic residues. Residues 370 to 393 (SMKKESELPRRVNSASSSNPPAEV) are disordered. Lysine 372 participates in a covalent cross-link: Glycyl lysine isopeptide (Lys-Gly) (interchain with G-Cter in SUMO2). Serine 383 and serine 385 each carry phosphoserine; by RPS6KB1. Lysine 418 is covalently cross-linked (Glycyl lysine isopeptide (Lys-Gly) (interchain with G-Cter in SUMO2)).

Interacts with POLD2. Interacts with NCBP1 and EIF4A3. Associates with the multiprotein exon junction complex (EJC). Interacts with RPS6KB1 (activated). Interacts with ERH. Interacts with THOC2, DDX39B and ZC3H11A; the interactions are ATP-dependent and indicative for an association with the TREX complex. Post-translationally, phosphorylated at Ser-383 and Ser-385 by RPS6KB1.

The protein resides in the nucleus. It localises to the nucleus speckle. Its subcellular location is the cytoplasm. Functionally, is involved in regulation of translation. Is preferentially associated with CBC-bound spliced mRNA-protein complexes during the pioneer round of mRNA translation. Contributes to enhanced translational efficiency of spliced over nonspliced mRNAs. Recruits activated ribosomal protein S6 kinase beta-1 I/RPS6KB1 to newly synthesized mRNA. Involved in nuclear mRNA export; probably mediated by association with the TREX complex. In Homo sapiens (Human), this protein is Polymerase delta-interacting protein 3 (POLDIP3).